The chain runs to 458 residues: UDP-N-acetylmuramate--L-alanine ligase (458 aa).

ATP is bound at residue 118 to 124 (GTHGKTT).

This sequence belongs to the MurCDEF family.

The protein localises to the cytoplasm. The catalysed reaction is UDP-N-acetyl-alpha-D-muramate + L-alanine + ATP = UDP-N-acetyl-alpha-D-muramoyl-L-alanine + ADP + phosphate + H(+). It participates in cell wall biogenesis; peptidoglycan biosynthesis. Its function is as follows. Cell wall formation. This Clostridium acetobutylicum (strain ATCC 824 / DSM 792 / JCM 1419 / IAM 19013 / LMG 5710 / NBRC 13948 / NRRL B-527 / VKM B-1787 / 2291 / W) protein is UDP-N-acetylmuramate--L-alanine ligase.